The sequence spans 945 residues: Isoleucine--tRNA ligase 1 (945 aa).

Positions 66 to 76 match the 'HIGH' region motif; that stretch reads PYANGDIHLGH. Glu581 contacts L-isoleucyl-5'-AMP. The short motif at 622 to 626 is the 'KMSKS' region element; the sequence is KMSKS. Lys625 provides a ligand contact to ATP. Zn(2+) is bound by residues Cys908, Cys911, Cys928, and Cys931.

It belongs to the class-I aminoacyl-tRNA synthetase family. IleS type 1 subfamily. In terms of assembly, monomer. It depends on Zn(2+) as a cofactor.

The protein localises to the cytoplasm. It carries out the reaction tRNA(Ile) + L-isoleucine + ATP = L-isoleucyl-tRNA(Ile) + AMP + diphosphate. Functionally, catalyzes the attachment of isoleucine to tRNA(Ile). As IleRS can inadvertently accommodate and process structurally similar amino acids such as valine, to avoid such errors it has two additional distinct tRNA(Ile)-dependent editing activities. One activity is designated as 'pretransfer' editing and involves the hydrolysis of activated Val-AMP. The other activity is designated 'posttransfer' editing and involves deacylation of mischarged Val-tRNA(Ile). This is Isoleucine--tRNA ligase 1 from Burkholderia pseudomallei (strain K96243).